The primary structure comprises 201 residues: MNPEYDYLFKLLLIGDSGVGKSCLLLRFADDTYTESYISTIGVDFKIRTIELDGKTIKLQIWDTAGQERFRTITSSYYRGAHGIIVVYDVTDQESYANVKQWLQEIDRYASENVNKLLVGNKSDLTTKKVVDNTTAKEFADSLGVPFLETSAKNATNVEQAFMTMAAEIKKRMGPGAASGGERPNLKIDSTPVKPASGGCC.

Position 1 is an N-acetylmethionine (Met-1). Ser-17, Gly-18, Val-19, Gly-20, Lys-21, Ser-22, Cys-23, Tyr-33, Thr-34, Glu-35, Ser-36, Ser-39, and Thr-40 together coordinate GTP. A Mg(2+)-binding site is contributed by Ser-22. Residues 30-45 (DDTYTESYISTIGVDF) carry the Switch 1 motif. Mg(2+) is bound by residues Thr-40 and Asp-63. Residues 64–83 (TAGQERFRTITSSYYRGAHG) are switch 2 region; required for interaction with REP1/CHM. The short motif at 65 to 80 (AGQERFRTITSSYYRG) is the Switch 2 element. GTP-binding residues include Gly-66, Asn-121, Lys-122, Asp-124, Ser-151, Ala-152, and Lys-153. The disordered stretch occupies residues 174–201 (GPGAASGGERPNLKIDSTPVKPASGGCC). Residues Cys-200 and Cys-201 are each lipidated (S-geranylgeranyl cysteine). Cys-201 carries the post-translational modification Cysteine methyl ester.

It belongs to the small GTPase superfamily. Rab family. In terms of assembly, interacts with MICAL1 and MICAL2. Interacts (GTP-bound form) with MICALCL, MICAL1 and MILCAL3. Interacts with GDI1; the interaction requires the GDP-bound state. Interacts with CHM/REP1; the interaction requires the GDP-bound form and is necessary for prenylation by GGTase II. Interacts with RabGAP TBC1D20. Interacts (in GDP-bound form) with lipid phosphatase MTMR6 (via GRAM domain); the interaction regulates MTMR6 recruitment to the endoplasmic reticulum-Golgi intermediate compartment. Interacts (in GDP-bound form) with lipid phosphatase MTMR7. Mg(2+) serves as cofactor. Prenylated; by GGTase II, only after interaction of the substrate with Rab escort protein 1 (REP1).

The protein localises to the cytoplasm. Its subcellular location is the membrane. The protein resides in the preautophagosomal structure membrane. It is found in the perinuclear region. The enzyme catalyses GTP + H2O = GDP + phosphate + H(+). Regulated by guanine nucleotide exchange factors (GEFs) which promote the exchange of bound GDP for free GTP. Regulated by GTPase activating proteins (GAPs) including TBC1D20 which increases the GTP hydrolysis activity. Inhibited by GDP dissociation inhibitors (GDIs). The small GTPases Rab are key regulators of intracellular membrane trafficking, from the formation of transport vesicles to their fusion with membranes. Rabs cycle between an inactive GDP-bound form and an active GTP-bound form that is able to recruit to membranes different set of downstream effectors directly responsible for vesicle formation, movement, tethering and fusion. Plays a role in the initial events of the autophagic vacuole development which take place at specialized regions of the endoplasmic reticulum. Regulates vesicular transport between the endoplasmic reticulum and successive Golgi compartments. Required to modulate the compacted morphology of the Golgi. Promotes the recruitment of lipid phosphatase MTMR6 to the endoplasmic reticulum-Golgi intermediate compartment. The chain is Ras-related protein Rab-1B (Rab1b) from Mus musculus (Mouse).